Reading from the N-terminus, the 497-residue chain is Gasdermin-E (497 aa).

Positions 1 to 56 (MFAKATRSFLREVDAEGDLIAVSNLNDSDKSQLLSLVTKKKRFWCWQRPKYQFLSV) are membrane targeting domain. C45 is modified (S-(2-succinyl)cysteine). A Glycyl lysine isopeptide (Lys-Gly) (interchain with G-Cter in ubiquitin) cross-link involves residue K120. Residues C156, C168, and C180 each carry the S-(2-succinyl)cysteine modification. Residue K189 forms a Glycyl lysine isopeptide (Lys-Gly) (interchain with G-Cter in ubiquitin) linkage. Residues C235, C371, C409, C418, and C491 each carry the S-(2-succinyl)cysteine modification.

It belongs to the gasdermin family. In terms of assembly, homooligomer; homooligomeric ring-shaped pore complex containing 27-28 subunits when inserted in the membrane. Post-translationally, cleavage at Asp-270 by CASP3 (mature and uncleaved precursor forms) or granzyme B (GZMB) relieves autoinhibition and is sufficient to initiate pyroptosis. In terms of processing, succination by the Krebs cycle intermediate fumarate, which leads to S-(2-succinyl)cysteine residues, inhibits processing by caspases, and ability to initiate pyroptosis. Succination modification is catalyzed by a non-enzymatic reaction caused by an accumulation of fumarate. Ubiquitinated on Lys-120 and Lys-189 via 'Lys-48'-linked polyubiquitin chains, leading to proteasomal degradation. Deubiquitinated by USP48, leading to increased stability. Post-translationally, palmitoylated.

The protein localises to the cell membrane. It is found in the cytoplasm. It localises to the cytosol. The full-length protein before cleavage is inactive: intramolecular interactions between N- and C-terminal domains mediate autoinhibition in the absence of activation signal. The intrinsic pyroptosis-inducing activity is carried by the released N-terminal moiety (Gasdermin-E, N-terminal) following cleavage by CASP3 or granzyme B (GZMB). Activated by NLRP1 in the absence of GSDMD expression: NLRP1 cleaves and activates CASP8, promoting downstream activation of CASP3 and subsequent activation of GSDME. Functionally, precursor of a pore-forming protein that converts non-inflammatory apoptosis to pyroptosis. This form constitutes the precursor of the pore-forming protein: upon cleavage, the released N-terminal moiety (Gasdermin-E, N-terminal) binds to membranes and forms pores, triggering pyroptosis. Its function is as follows. Pore-forming protein produced by cleavage by CASP3 or granzyme B (GZMB), which converts non-inflammatory apoptosis to pyroptosis or promotes granzyme-mediated pyroptosis, respectively. After cleavage, moves to the plasma membrane, homooligomerizes within the membrane and forms pores of 10-15 nanometers (nm) of inner diameter, allowing the release of mature interleukins (IL1B and IL16) and triggering pyroptosis. Binds to inner leaflet lipids, bisphosphorylated phosphatidylinositols, such as phosphatidylinositol (4,5)-bisphosphate. Cleavage by CASP3 switches CASP3-mediated apoptosis induced by TNF or danger signals, such as chemotherapy drugs, to pyroptosis. Mediates secondary necrosis downstream of the mitochondrial apoptotic pathway and CASP3 activation as well as in response to viral agents. Exhibits bactericidal activity. Cleavage by GZMB promotes tumor suppressor activity by triggering robust anti-tumor immunity. Suppresses tumors by mediating granzyme-mediated pyroptosis in target cells of natural killer (NK) cells: cleavage by granzyme B (GZMB), delivered to target cells from NK-cells, triggers pyroptosis of tumor cells and tumor suppression. May play a role in the p53/TP53-regulated cellular response to DNA damage. This chain is Gasdermin-E, found in Equus caballus (Horse).